Here is a 118-residue protein sequence, read N- to C-terminus: Large ribosomal subunit protein bL17 (118 aa).

It belongs to the bacterial ribosomal protein bL17 family. In terms of assembly, part of the 50S ribosomal subunit. Contacts protein L32.

This Thermus thermophilus (strain ATCC BAA-163 / DSM 7039 / HB27) protein is Large ribosomal subunit protein bL17.